We begin with the raw amino-acid sequence, 388 residues long: Leucine aminopeptidase 1 (388 aa).

The signal sequence occupies residues 1 to 19 (MKSLSLLALAAIAPPAAVA). Positions 20–88 (AVVDRQVPFE…SAKSHERIQV (69 aa)) are excised as a propeptide. Residue Asn180 is glycosylated (N-linked (GlcNAc...) asparagine). Zn(2+) contacts are provided by His188, Asp207, Glu246, and Asp273. Cys322 and Cys326 are disulfide-bonded. His355 is a Zn(2+) binding site.

Belongs to the peptidase M28 family. M28E subfamily. Monomer. Requires Zn(2+) as cofactor.

The protein localises to the secreted. In terms of biological role, extracellular aminopeptidase that allows assimilation of proteinaceous substrates. The protein is Leucine aminopeptidase 1 (LAP1) of Coccidioides posadasii (strain C735) (Valley fever fungus).